A 527-amino-acid chain; its full sequence is Amino acid transporter heavy chain SLC3A2 (527 aa).

Residues 1–31 (MSQDTEVDMKDVELNELEPEKQPMNAADGAA) are disordered. Residues 1–75 (MSQDTEVDMK…AGSPGWVRTR (75 aa)) lie on the Cytoplasmic side of the membrane. At serine 2 the chain carries Phosphoserine. Position 5 is a phosphothreonine (threonine 5). The span at 7–21 (VDMKDVELNELEPEK) shows a compositional bias: basic and acidic residues. Residue lysine 42 forms a Glycyl lysine isopeptide (Lys-Gly) (interchain with G-Cter in ubiquitin) linkage. Phosphoserine is present on serine 58. Residue lysine 59 forms a Glycyl lysine isopeptide (Lys-Gly) (interchain with G-Cter in SUMO2) linkage. A helical; Signal-anchor for type II membrane protein transmembrane segment spans residues 76–98 (WALLLLFWLGWLGMLAGAVVIIV). Residues 99–527 (RAPRCRELPV…GLLLQFPFVA (429 aa)) are Extracellular-facing. N-linked (GlcNAc...) asparagine glycans are attached at residues asparagine 166, asparagine 249, asparagine 259, and asparagine 263. Position 300 is a phosphoserine (serine 300). N-linked (GlcNAc...) asparagine glycans are attached at residues asparagine 318, asparagine 386, and asparagine 400. Serine 421 is modified (phosphoserine). Asparagine 510 is a glycosylation site (N-linked (GlcNAc...) asparagine).

This sequence belongs to the SLC3A transporter family. As to quaternary structure, disulfide-linked heterodimer with a non-glycosylated light chain (SLC7A5, SLC7A6, SLC7A7, SLC7A8, SLC7A10 or SLC7A11). Interacts with TLCD3A/CT120 and ICAM1. Constitutively and specifically associates with beta-1 integrins (alpha-2/beta-1, alpha-3/beta-1, alpha-5/beta-1 and alpha-6/beta-1), but minimally with alpha-4/beta-1. Interacts with LAPTM4B; recruits SLC3A2 and SLC7A5 to lysosomes to promote leucine uptake into these organelles and is required for mTORC1 activation. Post-translationally, phosphorylation on Ser-300 and on Ser-421 by ecto-protein kinases favors heterotypic cell-cell interactions. N-glycosylated; N-glycosylation is crucial for trafficking and stability of SLC3A2 to the plasma membrane. In brain expressed on capillary endothelia in cerebral cortex (at protein level). Highest expression in kidney, jejunum, ileum, colon, placenta, testis and spleen. Lower levels found in liver, lung and brain with weakest expression in heart. Expressed in retina, inner blood-retinal barrier of retina, retinal vascular endothelial cells. Also expressed in C6 glioma cells and in the retinal capillary endothelial cell line TR-iBRB2.

Its subcellular location is the apical cell membrane. It localises to the cell membrane. The protein resides in the cell junction. It is found in the lysosome membrane. The protein localises to the melanosome. Its subcellular location is the basolateral cell membrane. Acts as a chaperone that facilitates biogenesis and trafficking of functional transporters heterodimers to the plasma membrane. Forms heterodimer with SLC7 family transporters (SLC7A5, SLC7A6, SLC7A7, SLC7A8, SLC7A10 and SLC7A11), a group of amino-acid antiporters. Heterodimers function as amino acids exchangers, the specificity of the substrate depending on the SLC7A subunit. Heterodimers formed by SLC3A2/SLC7A6 or SLC3A2/SLC7A7 mediate the uptake of dibasic amino acids. Heterodimer SLC3A2/SLC7A11 functions as an antiporter by mediating the exchange of extracellular anionic L-cystine and intracellular L-glutamate across the cellular plasma membrane. SLC3A2/SLC7A10 translocates small neutral L- and D-amino acids across the plasma membrane. SLC3A2/SLC75 or SLC3A2/SLC7A8 translocates neutral amino acids with broad specificity, thyroid hormones and L-DOPA. SLC3A2 is essential for plasma membrane localization, stability, and the transport activity of SLC7A5 and SLC7A8. When associated with LAPTM4B, the heterodimer SLC7A5 is recruited to lysosomes to promote leucine uptake into these organelles, and thereby mediates mTORC1 activation. Modulates integrin-related signaling and is essential for integrin-dependent cell spreading, migration and tumor progression. The protein is Amino acid transporter heavy chain SLC3A2 of Rattus norvegicus (Rat).